The following is a 402-amino-acid chain: Multidrug resistance protein MdtH (402 aa).

At 1-12 the chain is on the cytoplasmic side; it reads MSRVSQARNLGK. Residues 13–33 form a helical membrane-spanning segment; it reads YFLLIDNMLVVLGFFVVFPLI. Topologically, residues 34–98 are periplasmic; that stretch reads SIRFVDQMGW…GFATMGIAHE (65 aa). A helical transmembrane segment spans residues 99–116; that stretch reads PWLLWFSCFLSGLGGTLF. The Cytoplasmic portion of the chain corresponds to 117–138; sequence DPPRSALVVKLIRPEQRGRFFS. The chain crosses the membrane as a helical span at residues 139–159; that stretch reads LLMMQDSAGAVIGALLGSWLL. Residues 160–164 lie on the Periplasmic side of the membrane; that stretch reads QYDFR. The chain crosses the membrane as a helical span at residues 165–185; sequence LVCATGAILFILCALFNAWLL. Residues 186 to 213 are Cytoplasmic-facing; sequence PAWKLSTVRTPVREGMRRVMSDKRFVTY. Residues 214–234 form a helical membrane-spanning segment; it reads VLTLAGYYMLAVQVMLMLPIM. The Periplasmic segment spans residues 235-243; sequence VNDIAGSPA. A helical membrane pass occupies residues 244 to 264; that stretch reads AVKWMYAIEACLSLTLLYPIA. The Cytoplasmic portion of the chain corresponds to 265–276; that stretch reads RWSEKRFRLEHR. The helical transmembrane segment at 277-297 threads the bilayer; it reads LMAGLLVMSLSMIPIGMVGNL. Topologically, residues 298 to 299 are periplasmic; that stretch reads QQ. The helical transmembrane segment at 300 to 320 threads the bilayer; it reads LFTLICAFYIGSVIAEPARET. At 321-339 the chain is on the cytoplasmic side; the sequence is LSASLADARARGSYMGFSR. The helical transmembrane segment at 340–360 threads the bilayer; the sequence is LGLAIGGAIGYIGGGWLFDMG. Topologically, residues 361 to 367 are periplasmic; the sequence is KALTQPE. Residues 368–388 form a helical membrane-spanning segment; sequence LPWMMLGIIGFITFLALGWQF. The Cytoplasmic segment spans residues 389 to 402; that stretch reads SHKRTPRRMLEPGA.

Belongs to the major facilitator superfamily. DHA1 family. MdtH (TC 2.A.1.2.21) subfamily.

The protein localises to the cell inner membrane. In Salmonella paratyphi B (strain ATCC BAA-1250 / SPB7), this protein is Multidrug resistance protein MdtH.